A 57-amino-acid chain; its full sequence is MATPKRRMSRANTRSRRSQWKATKAELVGVTVAGQKHKVPRRLLKAARLGLIDLDRR.

Residues 1–19 (MATPKRRMSRANTRSRRSQ) are compositionally biased toward basic residues. The tract at residues 1 to 20 (MATPKRRMSRANTRSRRSQW) is disordered.

This sequence belongs to the bacterial ribosomal protein bL32 family.

The protein is Large ribosomal subunit protein bL32 of Mycobacterium marinum (strain ATCC BAA-535 / M).